Reading from the N-terminus, the 178-residue chain is Large ribosomal subunit protein uL6 (178 aa).

The protein belongs to the universal ribosomal protein uL6 family. Part of the 50S ribosomal subunit.

Its function is as follows. This protein binds to the 23S rRNA, and is important in its secondary structure. It is located near the subunit interface in the base of the L7/L12 stalk, and near the tRNA binding site of the peptidyltransferase center. The sequence is that of Large ribosomal subunit protein uL6 from Desulfatibacillum aliphaticivorans.